Here is a 202-residue protein sequence, read N- to C-terminus: uncharacterized protein (202 aa).

At Met-1–Leu-6 the chain is on the cytoplasmic side. A helical; Signal-anchor for type II membrane protein membrane pass occupies residues Leu-7–Leu-23. Residues Asn-24–Gly-202 are Extracellular-facing. Asn-53 carries an N-linked (GlcNAc...) asparagine glycan.

The protein resides in the membrane. This is an uncharacterized protein from Caenorhabditis elegans.